Here is a 252-residue protein sequence, read N- to C-terminus: MTAPAICNTTETVHGIATSLGAVARQASLPRIVGTVVGITVLVVVALLVPVPTAVELRDWAKSLGAWFPLAFLLVHTVVTVPPFPRTAFTLAAGLLFGSVVGVFIAVVGSTASAVIAMLLVRATGWQLNSLVRRRAINRLDERLRERGWLAILSLRLIPVVPFAAINYAAGASGVRILSFAWATLAGLLPGTAAVVILGDAFAGSGSPLLILVSVCTGALGLTGLVYEIRNYRRQHRRMPGYDDPVREPALI.

The next 6 helical transmembrane spans lie at 32–52 (IVGT…VPVP), 64–84 (LGAW…VPPF), 88–108 (AFTL…IAVV), 149–169 (WLAI…INYA), 177–197 (ILSF…AVVI), and 209–229 (LLIL…VYEI).

It belongs to the TVP38/TMEM64 family.

Its subcellular location is the cell membrane. This Mycobacterium bovis (strain ATCC BAA-935 / AF2122/97) protein is TVP38/TMEM64 family membrane protein Mb1528c.